Consider the following 1159-residue polypeptide: Syntaxin-binding protein 5-like (1159 aa).

Positions 1–37 (MKKFRKVLDGLTTSSPVNPGGSPGCGSAAGTPSAAPT) are disordered. A compositionally biased stretch (low complexity) spans 25-37 (CGSAAGTPSAAPT). 10 WD repeats span residues 67–108 (TALA…CHSQ), 115–154 (VLQM…SLKF), 159–195 (ITFC…GYVI), 214–248 (HLSD…DFRI), 254–286 (IHSV…TAKP), 307–350 (PILK…KAIT), 358–392 (IVDF…VVDL), 414–491 (TCTA…YKLK), 519–628 (QMIS…ELVV), and 642–703 (TCLD…STSG). Disordered regions lie at residues 571–604 (SDTE…SVRD) and 690–770 (LTRS…KAQS). Composition is skewed to polar residues over residues 699–713 (QSTS…NQVS) and 721–739 (SPTS…SQPC). WD repeat units follow at residues 808–865 (VTTL…TGTV), 874–946 (RFGF…QACL), 951–995 (ITES…LDVS), and 1009–1032 (CFTN…TYSQ). The v-SNARE coiled-coil homology domain maps to 1094-1154 (GIEGMKAAAG…HELMLKCKDK (61 aa)).

It belongs to the WD repeat L(2)GL family.

Its subcellular location is the cytoplasm. The protein resides in the cell membrane. The protein localises to the membrane. In terms of biological role, may play a role in vesicle trafficking and exocytosis. The protein is Syntaxin-binding protein 5-like (stxbp5l) of Danio rerio (Zebrafish).